The primary structure comprises 118 residues: MFEPFLLAVEGQEFLTGFHVEGPLAGLIIILIALLLLWIFKKVLKLVVVLIGAVVGYFVGEAVEPSLSLVFAAGFAIVGIWAMSGDKSKKKGKKQRSILKDADDWDDDSWDDEGDWDE.

Transmembrane regions (helical) follow at residues 20-39 (VEGP…LLWI), 46-63 (LVVV…GEAV), and 67-85 (LSLV…AMSG). Residues 85–118 (GDKSKKKGKKQRSILKDADDWDDDSWDDEGDWDE) are disordered. Over residues 88-97 (SKKKGKKQRS) the composition is skewed to basic residues. A compositionally biased stretch (acidic residues) spans 103-118 (DDWDDDSWDDEGDWDE).

Its subcellular location is the cell membrane. This is an uncharacterized protein from Archaeoglobus fulgidus (strain ATCC 49558 / DSM 4304 / JCM 9628 / NBRC 100126 / VC-16).